We begin with the raw amino-acid sequence, 908 residues long: Protein translocase subunit SecA (908 aa).

ATP-binding positions include Gln-87, Gly-105–Thr-109, and Asp-512. Residues Gly-866–Ser-908 are disordered. The span at Met-879–Arg-888 shows a compositional bias: basic and acidic residues. Residues Cys-892, Cys-894, Cys-903, and His-904 each coordinate Zn(2+). Positions Arg-898 to Ser-908 are enriched in basic residues.

Belongs to the SecA family. In terms of assembly, monomer and homodimer. Part of the essential Sec protein translocation apparatus which comprises SecA, SecYEG and auxiliary proteins SecDF-YajC and YidC. Zn(2+) is required as a cofactor.

It localises to the cell inner membrane. Its subcellular location is the cytoplasm. The enzyme catalyses ATP + H2O + cellular proteinSide 1 = ADP + phosphate + cellular proteinSide 2.. In terms of biological role, part of the Sec protein translocase complex. Interacts with the SecYEG preprotein conducting channel. Has a central role in coupling the hydrolysis of ATP to the transfer of proteins into and across the cell membrane, serving both as a receptor for the preprotein-SecB complex and as an ATP-driven molecular motor driving the stepwise translocation of polypeptide chains across the membrane. The sequence is that of Protein translocase subunit SecA from Shewanella oneidensis (strain ATCC 700550 / JCM 31522 / CIP 106686 / LMG 19005 / NCIMB 14063 / MR-1).